The chain runs to 205 residues: Alpha-1-acid glycoprotein (205 aa).

An N-terminal signal peptide occupies residues 1-18 (MALHMVLVVLSLLPLLEA). N-linked (GlcNAc...) asparagine glycosylation is found at Asn25, Asn34, Asn76, Asn94, Asn104, and Asn134. A disulfide bond links Cys91 and Cys183.

The protein belongs to the calycin superfamily. Lipocalin family.

It is found in the secreted. In terms of biological role, functions as a transport protein in the blood stream. Binds various ligands in the interior of its beta-barrel domain. Appears to function in modulating the activity of the immune system during the acute-phase reaction. The chain is Alpha-1-acid glycoprotein (Orm1) from Rattus norvegicus (Rat).